Reading from the N-terminus, the 82-residue chain is Delta-conotoxin SVIE (82 aa).

The first 22 residues, 1–22 (MKLTCVMIVAVLFLTTWTFVTA), serve as a signal peptide directing secretion. A propeptide spanning residues 23 to 51 (DDSRYGLKNLFPKARHEMKNPEASKLNKR) is cleaved from the precursor. Disulfide bonds link C54/C69, C61/C73, and C68/C77. A 4-hydroxyproline modification is found at P65.

Belongs to the conotoxin O1 superfamily. As to expression, expressed by the venom duct.

Its subcellular location is the secreted. Functionally, delta-conotoxins bind to site 6 of voltage-gated sodium channels (Nav) and inhibit the inactivation process. Impairs rapid channel inactivation of Nav1.4/SCN4A (Kd=500 nM). Interacts with a conserved hydrophobic triad (YFV) in the domain-4 voltage sensor of sodium channels. In vivo, injection of both native or synthetic peptide induces twitching of back limbs, running in circles, and spastic paralysis. This is Delta-conotoxin SVIE (SO6) from Conus striatus (Striated cone).